A 93-amino-acid polypeptide reads, in one-letter code: Probable Fe(2+)-trafficking protein (93 aa).

Belongs to the Fe(2+)-trafficking protein family.

In terms of biological role, could be a mediator in iron transactions between iron acquisition and iron-requiring processes, such as synthesis and/or repair of Fe-S clusters in biosynthetic enzymes. The polypeptide is Probable Fe(2+)-trafficking protein (Acidithiobacillus ferrooxidans (strain ATCC 23270 / DSM 14882 / CIP 104768 / NCIMB 8455) (Ferrobacillus ferrooxidans (strain ATCC 23270))).